Reading from the N-terminus, the 96-residue chain is Co-chaperonin GroES (96 aa).

Belongs to the GroES chaperonin family. Heptamer of 7 subunits arranged in a ring. Interacts with the chaperonin GroEL.

Its subcellular location is the cytoplasm. In terms of biological role, together with the chaperonin GroEL, plays an essential role in assisting protein folding. The GroEL-GroES system forms a nano-cage that allows encapsulation of the non-native substrate proteins and provides a physical environment optimized to promote and accelerate protein folding. GroES binds to the apical surface of the GroEL ring, thereby capping the opening of the GroEL channel. This is Co-chaperonin GroES from Buchnera aphidicola subsp. Myzus persicae (Myzus persicae primary endosymbiont).